A 538-amino-acid chain; its full sequence is Bifunctional purine biosynthesis protein PurH (538 aa).

Positions 8 to 158 (IPAPDKVEIK…KNHAYVTILT (151 aa)) constitute an MGS-like domain.

Belongs to the PurH family.

It carries out the reaction (6R)-10-formyltetrahydrofolate + 5-amino-1-(5-phospho-beta-D-ribosyl)imidazole-4-carboxamide = 5-formamido-1-(5-phospho-D-ribosyl)imidazole-4-carboxamide + (6S)-5,6,7,8-tetrahydrofolate. The catalysed reaction is IMP + H2O = 5-formamido-1-(5-phospho-D-ribosyl)imidazole-4-carboxamide. It participates in purine metabolism; IMP biosynthesis via de novo pathway; 5-formamido-1-(5-phospho-D-ribosyl)imidazole-4-carboxamide from 5-amino-1-(5-phospho-D-ribosyl)imidazole-4-carboxamide (10-formyl THF route): step 1/1. Its pathway is purine metabolism; IMP biosynthesis via de novo pathway; IMP from 5-formamido-1-(5-phospho-D-ribosyl)imidazole-4-carboxamide: step 1/1. The protein is Bifunctional purine biosynthesis protein PurH of Rhizobium etli (strain CIAT 652).